The primary structure comprises 170 residues: Der GTPase-activating protein YihI (170 aa).

2 disordered regions span residues Met-1–Gln-96 and Leu-145–Asn-170. Residues Thr-20–Asp-30 show a composition bias toward basic and acidic residues. Positions Arg-31–His-40 are enriched in basic residues. The span at Tyr-147–Gln-159 shows a compositional bias: acidic residues.

This sequence belongs to the YihI family. As to quaternary structure, interacts with Der.

Functionally, a GTPase-activating protein (GAP) that modifies Der/EngA GTPase function. May play a role in ribosome biogenesis. This chain is Der GTPase-activating protein YihI, found in Salmonella arizonae (strain ATCC BAA-731 / CDC346-86 / RSK2980).